The sequence spans 431 residues: Trigger factor (431 aa).

Residues 165 to 250 (TDTAVFDFEG…LHQIKTKKIP (86 aa)) form the PPIase FKBP-type domain.

The protein belongs to the FKBP-type PPIase family. Tig subfamily.

It localises to the cytoplasm. It carries out the reaction [protein]-peptidylproline (omega=180) = [protein]-peptidylproline (omega=0). Involved in protein export. Acts as a chaperone by maintaining the newly synthesized protein in an open conformation. Functions as a peptidyl-prolyl cis-trans isomerase. This Aster yellows witches'-broom phytoplasma (strain AYWB) protein is Trigger factor.